The chain runs to 35 residues: Photosystem II reaction center protein T (35 aa).

A helical membrane pass occupies residues 3–23 (ALVYTFLLISTLGIIFFAIFF).

The protein belongs to the PsbT family. PSII is composed of 1 copy each of membrane proteins PsbA, PsbB, PsbC, PsbD, PsbE, PsbF, PsbH, PsbI, PsbJ, PsbK, PsbL, PsbM, PsbT, PsbY, PsbZ, Psb30/Ycf12, at least 3 peripheral proteins of the oxygen-evolving complex and a large number of cofactors. It forms dimeric complexes.

Its subcellular location is the plastid. It localises to the chloroplast thylakoid membrane. Its function is as follows. Found at the monomer-monomer interface of the photosystem II (PS II) dimer, plays a role in assembly and dimerization of PSII. PSII is a light-driven water plastoquinone oxidoreductase, using light energy to abstract electrons from H(2)O, generating a proton gradient subsequently used for ATP formation. This Welwitschia mirabilis (Tree tumbo) protein is Photosystem II reaction center protein T.